The primary structure comprises 121 residues: Large ribosomal subunit protein uL18 (121 aa).

It belongs to the universal ribosomal protein uL18 family. In terms of assembly, part of the 50S ribosomal subunit; part of the 5S rRNA/L5/L18/L25 subcomplex. Contacts the 5S and 23S rRNAs.

Functionally, this is one of the proteins that bind and probably mediate the attachment of the 5S RNA into the large ribosomal subunit, where it forms part of the central protuberance. This is Large ribosomal subunit protein uL18 from Paracidovorax citrulli (strain AAC00-1) (Acidovorax citrulli).